Consider the following 86-residue polypeptide: Large ribosomal subunit protein bL27c (86 aa).

The disordered stretch occupies residues 1–27; that stretch reads MAHKKGSGSTRNGRDSNSKRLGVKKYG.

The protein belongs to the bacterial ribosomal protein bL27 family.

The protein localises to the plastid. It is found in the chloroplast. This Pyropia yezoensis (Susabi-nori) protein is Large ribosomal subunit protein bL27c.